Reading from the N-terminus, the 610-residue chain is Protein SAN1 (610 aa).

The span at 1 to 10 shows a compositional bias: polar residues; it reads MSESGQEQNR. 2 disordered regions span residues 1–36 and 176–231; these read MSESGQEQNRGTNTSPNNAENNNNSNAASGPLNGGA and VDST…PSIP. Residues 11-36 are compositionally biased toward low complexity; that stretch reads GTNTSPNNAENNNNSNAASGPLNGGA. Residues 194–203 show a composition bias toward basic and acidic residues; that stretch reads EGTKKRKDNE. Polar residues predominate over residues 210–223; sequence TADNDSNPSITNAT. Residues 240–280 form an RING-type zinc finger; sequence NDEETNPSYKHSPIKLPCGHIFGRECIYKWSRLENSCPLCR. Disordered stretches follow at residues 318–348, 360–453, 471–502, 514–554, and 569–610; these read TAVNSTNENSSAPSENTSNTTVPTIGNASSG, VPQN…TDPH, GTSDTSATTAPGAQTVHNQGRNDSSSSDTTQG, GHFT…GVAS, and NNNS…RSSQ. A compositionally biased stretch (polar residues) spans 319-348; that stretch reads AVNSTNENSSAPSENTSNTTVPTIGNASSG. 2 stretches are compositionally biased toward low complexity: residues 384–406 and 425–447; these read NGPSSTTQNPPSNSGGSNNNQSP and PSASDSSASPSAANGPNSNNTSS. Polar residues predominate over residues 471-492; the sequence is GTSDTSATTAPGAQTVHNQGRN. Positions 493 to 502 are enriched in low complexity; sequence DSSSSDTTQG. 2 stretches are compositionally biased toward polar residues: residues 533–554 and 592–610; these read QQRGGSTGENNRNNLFSSGVAS and DTTIHNDVPNDNNEQRSSQ.

Functionally, plays a specific role in mating-type regulation of yeast, by acting post-translationally to control the stability or activity of the SIR4 proteins. This chain is Protein SAN1 (SAN1), found in Saccharomyces cerevisiae (strain ATCC 204508 / S288c) (Baker's yeast).